A 37-amino-acid polypeptide reads, in one-letter code: uncharacterized protein (37 aa).

This is an uncharacterized protein from Saccharomyces cerevisiae (strain ATCC 204508 / S288c) (Baker's yeast).